A 211-amino-acid polypeptide reads, in one-letter code: Protein-L-isoaspartate O-methyltransferase (211 aa).

Ser62 is a catalytic residue.

It belongs to the methyltransferase superfamily. L-isoaspartyl/D-aspartyl protein methyltransferase family.

The protein resides in the cytoplasm. The catalysed reaction is [protein]-L-isoaspartate + S-adenosyl-L-methionine = [protein]-L-isoaspartate alpha-methyl ester + S-adenosyl-L-homocysteine. Its function is as follows. Catalyzes the methyl esterification of L-isoaspartyl residues in peptides and proteins that result from spontaneous decomposition of normal L-aspartyl and L-asparaginyl residues. It plays a role in the repair and/or degradation of damaged proteins. This is Protein-L-isoaspartate O-methyltransferase from Shewanella frigidimarina (strain NCIMB 400).